We begin with the raw amino-acid sequence, 236 residues long: MAAARSCNGYARREGPPSPKLGTEKPRVSAGSGGSGDGWRGERPRSEEDNELSLPSLAAAYTTILRALGEDPERQGLLKTPWRAATAMQFFTKGYQETIADVLNDAIFDEDHDEMVIVKNIDMFSLCEHHLVPFVGKVHIGYLPNKQVLGLSKLARIVEIYSRRLQVQERLTKQIAIAITEALQPAGVGVVIEATHMCMVMRGVQKMNSKTATSTMLGVFREDPKTREEFLTLIRS.

The interval 1–52 (MAAARSCNGYARREGPPSPKLGTEKPRVSAGSGGSGDGWRGERPRSEEDNEL) is disordered. Residues cysteine 127, histidine 130, and cysteine 198 each coordinate Zn(2+).

It belongs to the GTP cyclohydrolase I family. In terms of assembly, toroid-shaped homodecamer, composed of two pentamers of five dimers.

It is found in the cytoplasm. The protein resides in the nucleus. It carries out the reaction GTP + H2O = 7,8-dihydroneopterin 3'-triphosphate + formate + H(+). It participates in cofactor biosynthesis; 7,8-dihydroneopterin triphosphate biosynthesis; 7,8-dihydroneopterin triphosphate from GTP: step 1/1. Its activity is regulated as follows. GTP shows a positive allosteric effect, and tetrahydrobiopterin inhibits the enzyme activity. Zinc is required for catalytic activity. Inhibited by Mg(2+). May positively regulate nitric oxide synthesis in endothelial cells. May be involved in dopamine synthesis. May modify pain sensitivity and persistence. This Gallus gallus (Chicken) protein is GTP cyclohydrolase 1 (GCH1).